The sequence spans 344 residues: Small neutral protease regulatory protein (344 aa).

One can recognise an HTH lysR-type domain in the interval 1–60; that stretch reads MELEVRHLRALCAIADAGSLHRAARRLGVAQPTLSTQLTRIEQALGGPLFTRERTGCRPT. Residues 20 to 39 constitute a DNA-binding region (H-T-H motif); sequence LHRAARRLGVAQPTLSTQLT. The segment at 322-344 is disordered; sequence SCGRAEGSRSRRPRDVAPPRPIG. Residues 327–338 are compositionally biased toward basic and acidic residues; it reads EGSRSRRPRDVA.

It belongs to the LysR transcriptional regulatory family.

Its function is as follows. Transcriptional activator of the gene (snpA) for the small neutral protease. This Streptomyces lividans protein is Small neutral protease regulatory protein (mprR).